Reading from the N-terminus, the 63-residue chain is MKASELREKSVEELNAELLGLLREQFNLRMQHATGQLTQTNQLKLVRRNIARVKTIITSKAGV.

The protein belongs to the universal ribosomal protein uL29 family.

This is Large ribosomal subunit protein uL29 from Shewanella frigidimarina (strain NCIMB 400).